Reading from the N-terminus, the 303-residue chain is Olfactory receptor 10A2 (303 aa).

Topologically, residues 1–12 (MSFSSLPTEIQS) are extracellular. Residues 13 to 33 (LLFLTFLTIYLVTLMGNCLII) traverse the membrane as a helical segment. Over 34–41 (LVTLADPM) the chain is Cytoplasmic. The chain crosses the membrane as a helical span at residues 42 to 62 (LHSPMYFFLRNLSFLEIGFNL). Topologically, residues 63-86 (VIVPKMLGTLLAQDTTISFLGCAT) are extracellular. A disulfide bond links Cys84 and Cys176. Residues 87-107 (QMYFFFFFGVAECFLLATMAY) form a helical membrane-spanning segment. The Cytoplasmic portion of the chain corresponds to 108–126 (DRYVAICSPLHYPVIMNQR). Residues 127–147 (TRAKLAAASWFPGFPVATVQT) traverse the membrane as a helical segment. Over 148–184 (TWLFSFPFCGTNKVNHFFCDSPPVLRLVCADTALFEI) the chain is Extracellular. The helical transmembrane segment at 185 to 204 (YAIVGTILVVMIPCLLILCS) threads the bilayer. Residues 205–224 (YTHIAAAILKIPSAKGKNKA) are Cytoplasmic-facing. Residues 225 to 245 (FSTCSSHLLVVSLFYISLSLT) traverse the membrane as a helical segment. Over 246–258 (YFRPKSNNSPEGK) the chain is Extracellular. Residues 259 to 279 (KLLSLSYTVMTPMLNPIIYSL) form a helical membrane-spanning segment. At 280-301 (RNNEVKNALSRTVSKALALRNC) the chain is on the cytoplasmic side.

The protein belongs to the G-protein coupled receptor 1 family.

Its subcellular location is the cell membrane. In terms of biological role, odorant receptor. The polypeptide is Olfactory receptor 10A2 (OR10A2) (Homo sapiens (Human)).